A 105-amino-acid chain; its full sequence is MICOS complex subunit Mic10 (105 aa).

The chain crosses the membrane as a helical span at residues 29–46; the sequence is LLKVTGGVAIGIVASVAF. Topologically, residues 47 to 105 are mitochondrial intermembrane; sequence FKSRSWPIWFGSGVGLGTGWSNCRHDFASPYVLHGKRVPAGQDSQGKPAYNIITEQHKQ. The interval 85 to 105 is disordered; it reads PAGQDSQGKPAYNIITEQHKQ.

The protein belongs to the MICOS complex subunit Mic10 family. As to quaternary structure, component of the mitochondrial contact site and cristae organizing system (MICOS) complex.

It localises to the mitochondrion inner membrane. Component of the MICOS complex, a large protein complex of the mitochondrial inner membrane that plays crucial roles in the maintenance of crista junctions, inner membrane architecture, and formation of contact sites to the outer membrane. The polypeptide is MICOS complex subunit Mic10 (Caenorhabditis elegans).